Consider the following 388-residue polypeptide: Succinate--CoA ligase [ADP-forming] subunit beta (388 aa).

Residues 9 to 244 (KQLFAEYGLP…PSQEDSREAH (236 aa)) form the ATP-grasp domain. ATP contacts are provided by residues Lys-46, 53 to 55 (GRG), Glu-99, Thr-102, and Glu-107. 2 residues coordinate Mg(2+): Asn-199 and Asp-213. Substrate is bound by residues Asn-264 and 321–323 (GIV).

This sequence belongs to the succinate/malate CoA ligase beta subunit family. In terms of assembly, heterotetramer of two alpha and two beta subunits. The cofactor is Mg(2+).

The enzyme catalyses succinate + ATP + CoA = succinyl-CoA + ADP + phosphate. The catalysed reaction is GTP + succinate + CoA = succinyl-CoA + GDP + phosphate. The protein operates within carbohydrate metabolism; tricarboxylic acid cycle; succinate from succinyl-CoA (ligase route): step 1/1. In terms of biological role, succinyl-CoA synthetase functions in the citric acid cycle (TCA), coupling the hydrolysis of succinyl-CoA to the synthesis of either ATP or GTP and thus represents the only step of substrate-level phosphorylation in the TCA. The beta subunit provides nucleotide specificity of the enzyme and binds the substrate succinate, while the binding sites for coenzyme A and phosphate are found in the alpha subunit. The protein is Succinate--CoA ligase [ADP-forming] subunit beta of Pseudoalteromonas translucida (strain TAC 125).